A 107-amino-acid chain; its full sequence is U1-lycotoxin-Ls1d (107 aa).

A signal peptide spans 1 to 20 (MMKVLVVVALLVTLISYSSS). The propeptide occupies 21–41 (EGIDDLEADELLSLMANEQTR). Cystine bridges form between Cys-44–Cys-59, Cys-51–Cys-68, Cys-58–Cys-86, and Cys-70–Cys-84.

It belongs to the neurotoxin 19 (CSTX) family. 04 (U1-Lctx) subfamily. In terms of tissue distribution, expressed by the venom gland.

It localises to the secreted. The protein is U1-lycotoxin-Ls1d of Lycosa singoriensis (Wolf spider).